A 431-amino-acid chain; its full sequence is Reverse prenyltransferase criA (431 aa).

Arg104, Lys193, Tyr195, Lys262, Tyr264, Tyr347, Tyr412, and Tyr416 together coordinate dimethylallyl diphosphate.

This sequence belongs to the tryptophan dimethylallyltransferase family. Monomer.

The enzyme catalyses cyclo(L-tryptophyl-L-alanyl) + dimethylallyl diphosphate = preechinulin + diphosphate. It participates in secondary metabolite biosynthesis. The protein operates within alkaloid biosynthesis. In terms of biological role, reverse prenyltransferase; part of the gene cluster that mediates the biosynthesis of echinulin family alkaloid. The pathway begins with the biosynthesis of the cyclic dipeptide cyclo-L-Trp-L-Ala (cyclo-TA) by the NRPS criC via condensation of L-alanine and L-tryptophan. The prenyltransferase criA then catalyzes the first prenylation step, a reverse prenylation reaction at C2, to yield preechinulin. Preechinulin is the substrate of the cytochrome P450 monooxygenase criE that catalyzes the formation of the double bond between C10 and C11 to produce neoechulin A. The unique prenyltransferase criF functions as a competitive enzyme with criE for preechinulin metabolization and uses preechinulin for effective regiospecific prenylations. Preechinulin is prenylated by criF at C5 or C7. C7-prenylation leads to accumulation of tardioxopiperazine B without further modification by criF. In contrast, the C5-prenylated tardioxopiperazine A can be prenylated again by criF, predominantly at C7 to form echinulin or less frequently at C4 to give variecolorin L. CriF also accepts neoechilunin A to produce varlecolorin G (prenylation at C5) or isoechinulin A (prenylation at C7). CriF further converts isoechinulin A into dehydroechinulin. Moreover, a yet unidentified enzyme can also convert neoechilunin A into neoechilunin B by introducing a double bond between positions C14 and C17 and thus provides a further substrate to criF for C5 and C7 prenylation. The polypeptide is Reverse prenyltransferase criA (Aspergillus cristatus (Chinese Fuzhuan brick tea-fermentation fungus)).